Here is a 346-residue protein sequence, read N- to C-terminus: Flap endonuclease 1 (346 aa).

Residues 1–102 (MGVTELGKLI…AEIEERRKTR (102 aa)) are N-domain. 7 residues coordinate Mg(2+): Asp-31, Asp-84, Glu-156, Glu-158, Asp-177, Asp-179, and Asp-239. An I-domain region spans residues 120–261 (DVAKYAKRAV…KALKLIWEFG (142 aa)).

It belongs to the XPG/RAD2 endonuclease family. FEN1 subfamily. As to quaternary structure, interacts with PCNA. PCNA stimulates the nuclease activity without altering cleavage specificity. The cofactor is Mg(2+).

Its function is as follows. Structure-specific nuclease with 5'-flap endonuclease and 5'-3' exonuclease activities involved in DNA replication and repair. During DNA replication, cleaves the 5'-overhanging flap structure that is generated by displacement synthesis when DNA polymerase encounters the 5'-end of a downstream Okazaki fragment. Binds the unpaired 3'-DNA end and kinks the DNA to facilitate 5' cleavage specificity. Cleaves one nucleotide into the double-stranded DNA from the junction in flap DNA, leaving a nick for ligation. Also involved in the base excision repair (BER) pathway. Acts as a genome stabilization factor that prevents flaps from equilibrating into structures that lead to duplications and deletions. Also possesses 5'-3' exonuclease activity on nicked or gapped double-stranded DNA. The chain is Flap endonuclease 1 from Pyrobaculum aerophilum (strain ATCC 51768 / DSM 7523 / JCM 9630 / CIP 104966 / NBRC 100827 / IM2).